The sequence spans 413 residues: Alpha-1-antitrypsin 1-5 (413 aa).

The first 24 residues, 1 to 24 (MTPSISWCLLLLAGLCCLVPSFLA), serve as a signal peptide directing secretion. N64, N101, and N265 each carry an N-linked (GlcNAc...) asparagine glycan. An RCL region spans residues 368 to 387 (AATVLQGGFLSMPPILHFNR).

This sequence belongs to the serpin family.

It localises to the secreted. Its function is as follows. Does not inhibit elastase or chymotrypsin. No target protease has been identified to date. In Mus musculus (Mouse), this protein is Alpha-1-antitrypsin 1-5 (Serpina1e).